A 283-amino-acid chain; its full sequence is Probable endonuclease 4 (283 aa).

Zn(2+)-binding residues include H67, H107, E144, D178, H181, H215, D228, H230, and E260.

This sequence belongs to the AP endonuclease 2 family. Requires Zn(2+) as cofactor.

It catalyses the reaction Endonucleolytic cleavage to 5'-phosphooligonucleotide end-products.. Functionally, endonuclease IV plays a role in DNA repair. It cleaves phosphodiester bonds at apurinic or apyrimidinic (AP) sites, generating a 3'-hydroxyl group and a 5'-terminal sugar phosphate. This chain is Probable endonuclease 4, found in Geobacter sp. (strain M21).